Reading from the N-terminus, the 366-residue chain is tRNA-specific 2-thiouridylase MnmA (366 aa).

Residues 6–13 (GLSGGVDS) and Met-32 each bind ATP. Residue Cys-96 is the Nucleophile of the active site. Cys-96 and Cys-196 are oxidised to a cystine. Gly-120 contacts ATP. The tract at residues 146 to 148 (KDQ) is interaction with tRNA. Residue Cys-196 is the Cysteine persulfide intermediate of the active site. The interval 302-303 (RY) is interaction with tRNA.

This sequence belongs to the MnmA/TRMU family.

Its subcellular location is the cytoplasm. It carries out the reaction S-sulfanyl-L-cysteinyl-[protein] + uridine(34) in tRNA + AH2 + ATP = 2-thiouridine(34) in tRNA + L-cysteinyl-[protein] + A + AMP + diphosphate + H(+). Catalyzes the 2-thiolation of uridine at the wobble position (U34) of tRNA, leading to the formation of s(2)U34. The protein is tRNA-specific 2-thiouridylase MnmA of Treponema denticola (strain ATCC 35405 / DSM 14222 / CIP 103919 / JCM 8153 / KCTC 15104).